Consider the following 351-residue polypeptide: N-acetyl-gamma-glutamyl-phosphate reductase (351 aa).

The active site involves cysteine 154.

This sequence belongs to the NAGSA dehydrogenase family. Type 1 subfamily.

The protein resides in the cytoplasm. It carries out the reaction N-acetyl-L-glutamate 5-semialdehyde + phosphate + NADP(+) = N-acetyl-L-glutamyl 5-phosphate + NADPH + H(+). Its pathway is amino-acid biosynthesis; L-arginine biosynthesis; N(2)-acetyl-L-ornithine from L-glutamate: step 3/4. Its function is as follows. Catalyzes the NADPH-dependent reduction of N-acetyl-5-glutamyl phosphate to yield N-acetyl-L-glutamate 5-semialdehyde. In Prochlorococcus marinus (strain MIT 9215), this protein is N-acetyl-gamma-glutamyl-phosphate reductase.